We begin with the raw amino-acid sequence, 282 residues long: 2-dehydro-3-deoxyphosphooctonate aldolase (282 aa).

Belongs to the KdsA family.

It localises to the cytoplasm. It catalyses the reaction D-arabinose 5-phosphate + phosphoenolpyruvate + H2O = 3-deoxy-alpha-D-manno-2-octulosonate-8-phosphate + phosphate. It functions in the pathway carbohydrate biosynthesis; 3-deoxy-D-manno-octulosonate biosynthesis; 3-deoxy-D-manno-octulosonate from D-ribulose 5-phosphate: step 2/3. It participates in bacterial outer membrane biogenesis; lipopolysaccharide biosynthesis. This Bradyrhizobium diazoefficiens (strain JCM 10833 / BCRC 13528 / IAM 13628 / NBRC 14792 / USDA 110) protein is 2-dehydro-3-deoxyphosphooctonate aldolase.